Consider the following 759-residue polypeptide: MSTEPEVNLKLAQEHGLNEEEYAKICEILGRTPSFTELGIYSVMWSEHCSYKNSIAVLKTLPRDGASLLTQAGEENAGLVDIGDNLAVAFKIESHNHPSAVEPYQGAATGVGGIHRDIFTMGARPVASLDSLRFGSPRDPRVRYLVDGVVRGIGDYGNSFGVPTVGGEIYFEDCYTGNPLVNVMSVGLVEHHKTVSATAWGKGNPVLIVGSSTGRDGIHGATFASEDLSEASEDKRPSVQVGDPFAEKLLLEATLEAIATGAVVGLQDMGAAGLTSSTSEMSARGIEKTGSGGIEIDLDLTPAREKGMTAYELMLSESQERMLIVAEKGREHEIIDVYKKWDVSAVVIGQVTDDNMLRVRHHGEVVAEIPATSLVLGGGAPVYIREAVEKKPDTPAADLVADDSLDFKALSLQLLSRPNIASKAWVYQQYDSMVQTNTVTPAGQTDAAVIRIKGTKKGLAMKTDCNSRYVYLNPKAGGAIAVAECARNIACTGAKPLAVTNCLNFGNPYKPEVYFQFKSAVEGIGDACRMFDTPITGGNVSFYNETSLGGGRTAIYPTPTIGMIGLLDNIDNLVESTFRKAGDAIVLLGAPELSLDGSEYLVMQYGTPGTDSPAVDLNHEKNLQELLVTLASKKLINSAHDVSDGGLAVTLAEKSIMNRERMLGFEVDLECSCKEGTAIQKQLFSEAQGRVVISVDPGRVGAVIEEADRLNIPGRVIGKVTPEGASIAVNGKPVAEFMIDELLHAYGHALESALHLEEL.

The active site involves H48. 2 residues coordinate ATP: Y51 and K91. E93 is a binding site for Mg(2+). Substrate contacts are provided by residues 94–97 (SHNH) and R116. The Proton acceptor role is filled by H95. D117 serves as a coordination point for Mg(2+). Q240 serves as a coordination point for substrate. Mg(2+) is bound at residue D268. 317 to 319 (ESQ) serves as a coordination point for substrate. Residues N501 and G538 each coordinate ATP. N539 is a binding site for Mg(2+). Residue S541 coordinates substrate.

It belongs to the FGAMS family. Monomer. Part of the FGAM synthase complex composed of 1 PurL, 1 PurQ and 2 PurS subunits.

The protein localises to the cytoplasm. It catalyses the reaction N(2)-formyl-N(1)-(5-phospho-beta-D-ribosyl)glycinamide + L-glutamine + ATP + H2O = 2-formamido-N(1)-(5-O-phospho-beta-D-ribosyl)acetamidine + L-glutamate + ADP + phosphate + H(+). It functions in the pathway purine metabolism; IMP biosynthesis via de novo pathway; 5-amino-1-(5-phospho-D-ribosyl)imidazole from N(2)-formyl-N(1)-(5-phospho-D-ribosyl)glycinamide: step 1/2. Its function is as follows. Part of the phosphoribosylformylglycinamidine synthase complex involved in the purines biosynthetic pathway. Catalyzes the ATP-dependent conversion of formylglycinamide ribonucleotide (FGAR) and glutamine to yield formylglycinamidine ribonucleotide (FGAM) and glutamate. The FGAM synthase complex is composed of three subunits. PurQ produces an ammonia molecule by converting glutamine to glutamate. PurL transfers the ammonia molecule to FGAR to form FGAM in an ATP-dependent manner. PurS interacts with PurQ and PurL and is thought to assist in the transfer of the ammonia molecule from PurQ to PurL. The polypeptide is Phosphoribosylformylglycinamidine synthase subunit PurL (Chlorobaculum tepidum (strain ATCC 49652 / DSM 12025 / NBRC 103806 / TLS) (Chlorobium tepidum)).